A 350-amino-acid polypeptide reads, in one-letter code: Holliday junction branch migration complex subunit RuvB (350 aa).

Positions 1-22 are disordered; the sequence is MDHTASLSPVRPEAQPTDDRER. Residues 1–185 are large ATPase domain (RuvB-L); sequence MDHTASLSPV…FGIVERFEFY (185 aa). Residues Leu-24, Arg-25, Gly-66, Lys-69, Thr-70, Thr-71, 132–134, Arg-175, Tyr-185, and Arg-222 each bind ATP; that span reads EDY. Thr-70 serves as a coordination point for Mg(2+). The segment at 186–256 is small ATPAse domain (RuvB-S); the sequence is TPEELAAIVQ…IVRAGLAHLK (71 aa). The head domain (RuvB-H) stretch occupies residues 259–350; that stretch reads ELGLELHDIQ…PHSPEQGTLL (92 aa). 2 residues coordinate DNA: Arg-314 and Arg-319.

This sequence belongs to the RuvB family. In terms of assembly, homohexamer. Forms an RuvA(8)-RuvB(12)-Holliday junction (HJ) complex. HJ DNA is sandwiched between 2 RuvA tetramers; dsDNA enters through RuvA and exits via RuvB. An RuvB hexamer assembles on each DNA strand where it exits the tetramer. Each RuvB hexamer is contacted by two RuvA subunits (via domain III) on 2 adjacent RuvB subunits; this complex drives branch migration. In the full resolvosome a probable DNA-RuvA(4)-RuvB(12)-RuvC(2) complex forms which resolves the HJ.

It localises to the cytoplasm. It catalyses the reaction ATP + H2O = ADP + phosphate + H(+). The RuvA-RuvB-RuvC complex processes Holliday junction (HJ) DNA during genetic recombination and DNA repair, while the RuvA-RuvB complex plays an important role in the rescue of blocked DNA replication forks via replication fork reversal (RFR). RuvA specifically binds to HJ cruciform DNA, conferring on it an open structure. The RuvB hexamer acts as an ATP-dependent pump, pulling dsDNA into and through the RuvAB complex. RuvB forms 2 homohexamers on either side of HJ DNA bound by 1 or 2 RuvA tetramers; 4 subunits per hexamer contact DNA at a time. Coordinated motions by a converter formed by DNA-disengaged RuvB subunits stimulates ATP hydrolysis and nucleotide exchange. Immobilization of the converter enables RuvB to convert the ATP-contained energy into a lever motion, pulling 2 nucleotides of DNA out of the RuvA tetramer per ATP hydrolyzed, thus driving DNA branch migration. The RuvB motors rotate together with the DNA substrate, which together with the progressing nucleotide cycle form the mechanistic basis for DNA recombination by continuous HJ branch migration. Branch migration allows RuvC to scan DNA until it finds its consensus sequence, where it cleaves and resolves cruciform DNA. This chain is Holliday junction branch migration complex subunit RuvB, found in Treponema pallidum (strain Nichols).